The primary structure comprises 509 residues: Histone deacetylase 2 (509 aa).

Residues 24–338 (RRVCYFYDPE…WCYETGVALG (315 aa)) form a histone deacetylase region. His158 functions as the Proton donor/acceptor in the catalytic mechanism. The Zn(2+) site is built by Asp193, His195, and Asp281. The segment at 394-509 (PSVQFEERIP…NAKNEPGSSL (116 aa)) is disordered. 3 stretches are compositionally biased toward basic and acidic residues: residues 398–409 (FEERIPETKLPE), 418–434 (DERH…DHKP), and 448–472 (VKRE…HKVP). The span at 481–494 (SSKQVPTADANSMA) shows a compositional bias: polar residues.

This sequence belongs to the histone deacetylase family. HD Type 1 subfamily. Requires Zn(2+) as cofactor. As to expression, expressed in roots.

It is found in the nucleus. It catalyses the reaction N(6)-acetyl-L-lysyl-[histone] + H2O = L-lysyl-[histone] + acetate. In terms of biological role, responsible for the deacetylation of lysine residues on the N-terminal part of the core histones (H2A, H2B, H3 and H4). Histone deacetylation gives a tag for epigenetic repression and plays an important role in transcriptional regulation, cell cycle progression and developmental events. Histone deacetylases act via the formation of large multiprotein complexes. In Oryza sativa subsp. japonica (Rice), this protein is Histone deacetylase 2.